A 194-amino-acid chain; its full sequence is Imidazoleglycerol-phosphate dehydratase (194 aa).

It belongs to the imidazoleglycerol-phosphate dehydratase family.

Its subcellular location is the cytoplasm. The enzyme catalyses D-erythro-1-(imidazol-4-yl)glycerol 3-phosphate = 3-(imidazol-4-yl)-2-oxopropyl phosphate + H2O. It participates in amino-acid biosynthesis; L-histidine biosynthesis; L-histidine from 5-phospho-alpha-D-ribose 1-diphosphate: step 6/9. This chain is Imidazoleglycerol-phosphate dehydratase, found in Thermoanaerobacter pseudethanolicus (strain ATCC 33223 / 39E) (Clostridium thermohydrosulfuricum).